The following is a 66-amino-acid chain: ATP synthase protein 8 (66 aa).

Residues threonine 8 to phenylalanine 24 form a helical membrane-spanning segment. Lysine 54 is subject to N6-acetyllysine; alternate. Residue lysine 54 is modified to N6-succinyllysine; alternate. At lysine 57 the chain carries N6-acetyllysine.

The protein belongs to the ATPase protein 8 family. As to quaternary structure, F-type ATPases have 2 components, CF(1) - the catalytic core - and CF(0) - the membrane proton channel. Component of an ATP synthase complex composed of ATP5PB, ATP5MC1, ATP5F1E, ATP5PD, ATP5ME, ATP5PF, ATP5MF, MT-ATP6, MT-ATP8, ATP5F1A, ATP5F1B, ATP5F1D, ATP5F1C, ATP5PO, ATP5MG, ATP5MK and ATP5MJ. Interacts with PRICKLE3.

Its subcellular location is the mitochondrion membrane. Functionally, mitochondrial membrane ATP synthase (F(1)F(0) ATP synthase or Complex V) produces ATP from ADP in the presence of a proton gradient across the membrane which is generated by electron transport complexes of the respiratory chain. F-type ATPases consist of two structural domains, F(1) - containing the extramembraneous catalytic core and F(0) - containing the membrane proton channel, linked together by a central stalk and a peripheral stalk. During catalysis, ATP synthesis in the catalytic domain of F(1) is coupled via a rotary mechanism of the central stalk subunits to proton translocation. Part of the complex F(0) domain. Minor subunit located with subunit a in the membrane. The chain is ATP synthase protein 8 (MT-ATP8) from Cervus elaphus hippelaphus (European red deer).